A 335-amino-acid chain; its full sequence is Urokinase plasminogen activator surface receptor (335 aa).

Residues 1-22 form the signal peptide; that stretch reads MGHPLLLPLLLLLHTCVPASWG. UPAR/Ly6 domains follow at residues 23–114, 115–213, and 214–305; these read LRCM…RSRY, LECI…PQNG, and HQCY…YRKG. Intrachain disulfides connect Cys25-Cys46, Cys28-Cys34, and Cys39-Cys67. An N-linked (GlcNAc...) asparagine glycan is attached at Asn74. Disulfide bonds link Cys93/Cys98, Cys117/Cys144, Cys120/Cys127, Cys137/Cys169, Cys175/Cys192, Cys193/Cys198, Cys216/Cys244, Cys219/Cys227, Cys237/Cys263, Cys269/Cys287, and Cys288/Cys293. 4 N-linked (GlcNAc...) asparagine glycosylation sites follow: Asn184, Asn194, Asn222, and Asn255. Residue Gly305 is the site of GPI-anchor amidated glycine attachment. The propeptide at 306–335 is removed in mature form; it reads AAPQPGPAHLSLTITLLMTARLWGGTLLWT.

As to quaternary structure, monomer. Interacts (via the UPAR/Ly6 domains) with SRPX2. Interacts with MRC2. Interacts with FAP (seprase); the interaction occurs at the cell surface of invadopodia membrane. Interacts with SORL1 (via N-terminal ectodomain); this interaction decreases PLAUR internalization. The ternary complex composed of PLAUR-PLAU-SERPINE1 also interacts with SORL1.

The protein localises to the cell membrane. Its subcellular location is the cell projection. The protein resides in the invadopodium membrane. Functionally, acts as a receptor for urokinase plasminogen activator. Plays a role in localizing and promoting plasmin formation. Mediates the proteolysis-independent signal transduction activation effects of U-PA. It is subject to negative-feedback regulation by U-PA which cleaves it into an inactive form. In Chlorocebus aethiops (Green monkey), this protein is Urokinase plasminogen activator surface receptor (PLAUR).